The sequence spans 360 residues: Cyclin-D1-binding protein 1 (360 aa).

A2 bears the N-acetylalanine mark. Interaction with TCF3 stretches follow at residues 2-184 and 150-360; these read ASAT…VDFV and ISYN…ELEL. Interaction with RPLP0 stretches follow at residues 2 to 190 and 240 to 360; these read ASAT…AHEE and LIIP…ELEL. Residues 2–208 are required for interaction with CCND1; that stretch reads ASATAPAAAV…DPYSGLLNDT (207 aa).

This sequence belongs to the CCNDBP1 family. Interacts with CCND1 and GRAP2. May also interact with COPS5, RPLP0, SIRT6, SYF2 and TCF3. Phosphorylated. In terms of tissue distribution, ubiquitously expressed. Expression is down-regulated in a variety of tumor types including breast, colon, prostate and rectal tumors, and is up-regulated in certain hepatic carcinomas.

It localises to the cytoplasm. Its subcellular location is the nucleus. Functionally, may negatively regulate cell cycle progression. May act at least in part via inhibition of the cyclin-D1/CDK4 complex, thereby preventing phosphorylation of RB1 and blocking E2F-dependent transcription. The protein is Cyclin-D1-binding protein 1 (CCNDBP1) of Homo sapiens (Human).